Here is a 121-residue protein sequence, read N- to C-terminus: Large ribosomal subunit protein uL18 (121 aa).

Belongs to the universal ribosomal protein uL18 family. As to quaternary structure, part of the 50S ribosomal subunit; part of the 5S rRNA/L5/L18/L25 subcomplex. Contacts the 5S and 23S rRNAs.

Its function is as follows. This is one of the proteins that bind and probably mediate the attachment of the 5S RNA into the large ribosomal subunit, where it forms part of the central protuberance. This Thermoanaerobacter pseudethanolicus (strain ATCC 33223 / 39E) (Clostridium thermohydrosulfuricum) protein is Large ribosomal subunit protein uL18.